The chain runs to 475 residues: Vitronectin (475 aa).

An N-terminal signal peptide occupies residues 1–19 (MAPLRPIFTLALLLWVVLA). The 44-residue stretch at 20-63 (DQESCKDRCTEGFNANRKCQCDELCSYYQSCCADYAAECKPQVT) folds into the SMB domain. 7 disulfides stabilise this stretch: Cys-24–Cys-28, Cys-24–Cys-40, Cys-28–Cys-58, Cys-38–Cys-40, Cys-38–Cys-51, Cys-44–Cys-50, and Cys-51–Cys-58. Residues 64 to 66 (RGD) carry the Cell attachment site motif. At Thr-69 the chain carries Phosphothreonine. Residues Tyr-75, Tyr-78, and Tyr-80 each carry the sulfotyrosine modification. N-linked (GlcNAc...) asparagine glycosylation is present at Asn-87. Residues 87 to 123 (NASVHAQPESPTVGQEPTLSPDLQTEGGAEPTHEVPL) are disordered. Polar residues predominate over residues 95-109 (ESPTVGQEPTLSPDL). Hemopexin repeat units follow at residues 158 to 202 (GKPF…VWGI), 203 to 250 (EGPI…FSGI), and 251 to 305 (PDNV…FEHF). N-linked (GlcNAc...) asparagine glycans are attached at residues Asn-169 and Asn-242. Sulfotyrosine is present on residues Tyr-279 and Tyr-282. At Ser-312 the chain carries Phosphoserine. A disordered region spans residues 359-391 (LTPSPSAKKQKSRRRSRKRYRSRYGRGRSQNSR). Basic residues predominate over residues 366–384 (KKQKSRRRSRKRYRSRYGR). Positions 366-392 (KKQKSRRRSRKRYRSRYGRGRSQNSRR) are glycosaminoglycan binding region. Ser-394 carries the phosphoserine modification. One copy of the Hemopexin 4 repeat lies at 419 to 469 (TSWLKPATSEPIQSVYFFSGDKYYRVNLRTQRVDTVNPPYPRSIAQYWLGC).

Interacts with SERPINE1/PAI1 and C1QBP. Monomer. Post-translationally, sulfated on tyrosine residues. N- and O-glycosylated. In terms of processing, it has been suggested that the active SMB domain may be permitted considerable disulfide bond heterogeneity or variability, thus two alternate disulfide patterns based on 3D structures are described with 1 disulfide bond conserved in both. In terms of tissue distribution, plasma.

Its subcellular location is the secreted. The protein resides in the extracellular space. Functionally, vitronectin is a cell adhesion and spreading factor found in serum and tissues. Vitronectin interact with glycosaminoglycans and proteoglycans. Is recognized by certain members of the integrin family and serves as a cell-to-substrate adhesion molecule. Inhibitor of the membrane-damaging effect of the terminal cytolytic complement pathway. In Oryctolagus cuniculus (Rabbit), this protein is Vitronectin (VTN).